The primary structure comprises 480 residues: Protein nucleotidyltransferase YdiU (480 aa).

Positions 86, 88, 89, 109, 121, 122, 172, and 179 each coordinate ATP. The active-site Proton acceptor is the Asp-248. The Mg(2+) site is built by Asn-249 and Asp-258. Asp-258 contributes to the ATP binding site.

It belongs to the SELO family. Mg(2+) is required as a cofactor. Mn(2+) serves as cofactor.

The enzyme catalyses L-seryl-[protein] + ATP = 3-O-(5'-adenylyl)-L-seryl-[protein] + diphosphate. It carries out the reaction L-threonyl-[protein] + ATP = 3-O-(5'-adenylyl)-L-threonyl-[protein] + diphosphate. The catalysed reaction is L-tyrosyl-[protein] + ATP = O-(5'-adenylyl)-L-tyrosyl-[protein] + diphosphate. It catalyses the reaction L-histidyl-[protein] + UTP = N(tele)-(5'-uridylyl)-L-histidyl-[protein] + diphosphate. The enzyme catalyses L-seryl-[protein] + UTP = O-(5'-uridylyl)-L-seryl-[protein] + diphosphate. It carries out the reaction L-tyrosyl-[protein] + UTP = O-(5'-uridylyl)-L-tyrosyl-[protein] + diphosphate. Nucleotidyltransferase involved in the post-translational modification of proteins. It can catalyze the addition of adenosine monophosphate (AMP) or uridine monophosphate (UMP) to a protein, resulting in modifications known as AMPylation and UMPylation. This chain is Protein nucleotidyltransferase YdiU, found in Salmonella agona (strain SL483).